Here is a 243-residue protein sequence, read N- to C-terminus: Probable transcriptional regulatory protein BAV2207 (243 aa).

A disordered region spans residues 1 to 21 (MAGHSKWANIQHRKGRQDAKR).

It belongs to the TACO1 family.

Its subcellular location is the cytoplasm. The sequence is that of Probable transcriptional regulatory protein BAV2207 from Bordetella avium (strain 197N).